We begin with the raw amino-acid sequence, 384 residues long: Opsin-3 (384 aa).

The Extracellular segment spans residues 1 to 62 (MATNFTQELY…VSKYWHYVLA (62 aa)). The N-linked (GlcNAc...) asparagine glycan is linked to N4. The chain crosses the membrane as a helical span at residues 63 to 83 (LIYTMLMVTSLTGNGIVIWIF). Topologically, residues 84–94 (STSKSLRSASN) are cytoplasmic. Residues 95–115 (MFVINLAVFDLMMMLEMPLLI) form a helical membrane-spanning segment. Residues 116–132 (MNSFYQRLVGYQLGCDV) are Extracellular-facing. An intrachain disulfide couples C130 to C207. The chain crosses the membrane as a helical span at residues 133–153 (YAVLGSLSGIGGAITNAVIAF). Over 154–171 (DRYKTISSPLDGRINTVQ) the chain is Cytoplasmic. A helical transmembrane segment spans residues 172-192 (AGLLIAFTWFWALPFTILPAF). The Extracellular segment spans residues 193-219 (RIWGRFVPEGFLTTCSFDYFTEDQDTE). Residues 220 to 240 (VFVACIFVWSYCIPMALICYF) traverse the membrane as a helical segment. The Cytoplasmic portion of the chain corresponds to 241–284 (YSQLFGAVRLHERMLQEQAKKMNVKSLASNKEDNSRSVEIRIAK). Residues 285–305 (VAFTIFFLFICAWTPYAFVTM) traverse the membrane as a helical segment. Residues 306–312 (TGAFGDR) are Extracellular-facing. The chain crosses the membrane as a helical span at residues 313–333 (TLLTPIATMIPAVCCKVVSCI). Residues 334–384 (DPWVYAINHPRYRAELQKRLPWMGVREQDPDAVSTTTSVATAGFQPPAAEA) are Cytoplasmic-facing.

This sequence belongs to the G-protein coupled receptor 1 family. Opsin subfamily. As to expression, in the retina, expression is essentially uniformly distributed but a higher level is seen in the ventral region where the B-cells are localized.

Its subcellular location is the membrane. Visual pigments are the light-absorbing molecules that mediate vision. They consist of an apoprotein, opsin, covalently linked to cis-retinal. May play a role in photoperiodic photoreception. This chain is Opsin-3 (OP3), found in Manduca sexta (Tobacco hawkmoth).